Consider the following 851-residue polypeptide: Meiotically up-regulated gene 87 protein (851 aa).

Belongs to the nucleoporin interacting component (NIC) family.

The protein localises to the nucleus envelope. Its function is as follows. Has a role in meiosis. This Schizosaccharomyces pombe (strain 972 / ATCC 24843) (Fission yeast) protein is Meiotically up-regulated gene 87 protein (mug87).